Here is a 1379-residue protein sequence, read N- to C-terminus: DNA-directed RNA polymerase subunit beta (1379 aa).

The protein belongs to the RNA polymerase beta chain family. The RNAP catalytic core consists of 2 alpha, 1 beta, 1 beta' and 1 omega subunit. When a sigma factor is associated with the core the holoenzyme is formed, which can initiate transcription.

The enzyme catalyses RNA(n) + a ribonucleoside 5'-triphosphate = RNA(n+1) + diphosphate. Its function is as follows. DNA-dependent RNA polymerase catalyzes the transcription of DNA into RNA using the four ribonucleoside triphosphates as substrates. The chain is DNA-directed RNA polymerase subunit beta from Rhizobium leguminosarum bv. trifolii (strain WSM2304).